The following is a 763-amino-acid chain: MERSGGNGAGARAGAPSEGAAKGSSLLSAKSTEGATGRFSQSTPRPTGMDGFLKSDERQRLAKERREEREKCLAAREQQILEKQKRAKLQYEKQIEERWRKLEEQRQREDQKRAAVEEKRKQKLREEEERLEAMMRRSLERTQQLELKKKCSWAGSAASGPGGRDGESENTPPLPLTLAASIPPSDTGTATAAAESTNACDKLSTSTMNLPKQTEPPMSKHLSSSIVAISYSPDRALRSPLKSSYKSSPTRTTEKKKNTLLSGVGDAGKGAMTGGEPSQMEKVKKGRGATSVSSGGLGSPLRRCEPPENISKRSSSPVKSKVTAKTYPQSPKTVKPTYIGSPVKYYFPPTPSEETLKKKAEKEKSNKEKEGATGRQTTVLPREETLEKPMADKDATEKYVADKHATEKHSATGGKAEHSAGKSTAGTTDAGEAAKILAEKRRQARLQKEQEEQERLEKEEQERLEKEELKRKAEEERLRIEKQEEEKKQQEEEEKRKAEEKAKEKAEEELLSKEEQEKEKQEKEKKEKAMIEKQIQAEKEAAEAKAQDAAKQMRLEREQIMLQIEQERLERKKRIDEIMKRTRKSDASLEVKKEDPKVEIQPLPDVENKIKPVVPNKIEINVLNTCQKVNVSERAAPETFPQDIFSNGLKPVGGPVHPDVLDGKSNSLDDSTEEVQSMDVSPVSKEELISIPEFSPVSEMIPGMSLDQNGTGNARALQDILDFTGPPAFPKKSSENLSLDDCNKNLIEGFNSPGQETTLNTFC.

Over residues 1–11 (MERSGGNGAGA) the composition is skewed to gly residues. 3 disordered regions span residues 1–72 (MERS…REKC), 102–127 (LEEQRQREDQKRAAVEEKRKQKLREE), and 140–531 (ERTQ…KAMI). The span at 12–31 (RAGAPSEGAAKGSSLLSAKS) shows a compositional bias: low complexity. Residues 53–72 (LKSDERQRLAKERREEREKC) show a composition bias toward basic and acidic residues. Polar residues-rich tracts occupy residues 184 to 212 (PSDTGTATAAAESTNACDKLSTSTMNLPK) and 241 to 251 (LKSSYKSSPTR). Over residues 312-321 (KRSSSPVKSK) the composition is skewed to low complexity. 3 stretches are compositionally biased toward basic and acidic residues: residues 354 to 372 (ETLKKKAEKEKSNKEKEGA), 381 to 420 (PREETLEKPMADKDATEKYVADKHATEKHSATGGKAEHSA), and 437 to 531 (LAEK…KAMI). The stretch at 434–575 (AKILAEKRRQ…QERLERKKRI (142 aa)) forms a coiled coil.

It belongs to the MAP7 family. In terms of assembly, interacts (via N-terminus) with microtubules; facilitates microtubule stabilization. Interacts with kinesin-1 family members, KIF5A, KIF5B and KIF5C. Detected only in the brain and testis (at the protein level).

The protein localises to the cytoplasm. It is found in the cytoskeleton. The protein resides in the microtubule organizing center. It localises to the centrosome. Its subcellular location is the cell projection. The protein localises to the axon. In terms of biological role, microtubule-stabilizing protein involved in the control of cell motility and neurite outgrowth. Acts as a critical cofactor for kinesin transport; in the proximal axon regulates kinesin-1 family members, KIF5A, KIF5B and KIF5C recruitment to microtubules and contributes to kinesin-1-mediated transport in the axons. This chain is MAP7 domain-containing protein 2 (Map7d2), found in Rattus norvegicus (Rat).